The sequence spans 107 residues: Serine-rich and transmembrane domain-containing protein 1 (107 aa).

A helical transmembrane segment spans residues 43-63; that stretch reads IYVSIFLSLLAFLLLLLIIAL.

Its subcellular location is the membrane. This Homo sapiens (Human) protein is Serine-rich and transmembrane domain-containing protein 1 (SERTM1).